A 138-amino-acid polypeptide reads, in one-letter code: uncharacterized protein (138 aa).

It to phage 186 CP81.

This is an uncharacterized protein from Salmonella typhimurium (strain LT2 / SGSC1412 / ATCC 700720).